The chain runs to 189 residues: MMKIVLISGKRKCGKDYISERLQRRLGSRSCIVRISEPIKSEWARKLQLDLDALLGDGPYKEKYRRDMIVWSDEVRAQDYGYFCRVAMEEALSRQQTPYILVSDVRRKNDIRWFRETYGPERVITLRLTSRPETRSARGWTFTAGIDDVPSECDLDDLADGFDVVLANDEELDQEAIDILLDRLQLQYR.

ATP-binding positions include 10 to 16 (KRKCGKD) and Arg138. Asn168 lines the substrate pocket.

Its subcellular location is the cytoplasm. The protein resides in the cytosol. The catalysed reaction is (R)-5-phosphomevalonate + ATP = (R)-5-diphosphomevalonate + ADP. It functions in the pathway isoprenoid biosynthesis; isopentenyl diphosphate biosynthesis via mevalonate pathway; isopentenyl diphosphate from (R)-mevalonate: step 2/3. The polypeptide is Phosphomevalonate kinase (Drosophila melanogaster (Fruit fly)).